The primary structure comprises 194 residues: Small ribosomal subunit protein uS7 (194 aa).

It belongs to the universal ribosomal protein uS7 family. As to quaternary structure, part of the 30S ribosomal subunit.

One of the primary rRNA binding proteins, it binds directly to 16S rRNA where it nucleates assembly of the head domain of the 30S subunit. Is located at the subunit interface close to the decoding center. This Archaeoglobus fulgidus (strain ATCC 49558 / DSM 4304 / JCM 9628 / NBRC 100126 / VC-16) protein is Small ribosomal subunit protein uS7.